We begin with the raw amino-acid sequence, 672 residues long: Penicillin-binding protein activator LpoA (672 aa).

An N-terminal signal peptide occupies residues 1–26 (MLPFHLVRTQAGRVIPVLLAALFLAG). Cysteine 27 is lipidated: N-palmitoyl cysteine. Residue cysteine 27 is the site of S-diacylglycerol cysteine attachment. Residues 298–336 (APPTDTAQAGQVTPSSDGQNAQSPAPYSDQAVASTTPAP) form a disordered region. The span at 305–322 (QAGQVTPSSDGQNAQSPA) shows a compositional bias: polar residues. The span at 327–336 (QAVASTTPAP) shows a compositional bias: low complexity.

Belongs to the LpoA family. Interacts with PBP1a.

The protein resides in the cell outer membrane. In terms of biological role, regulator of peptidoglycan synthesis that is essential for the function of penicillin-binding protein 1A (PBP1a). This is Penicillin-binding protein activator LpoA from Pectobacterium parmentieri (strain WPP163) (Pectobacterium wasabiae (strain WPP163)).